The following is a 178-amino-acid chain: uncharacterized protein (178 aa).

A disordered region spans residues Met1 to Leu89. 2 stretches are compositionally biased toward basic and acidic residues: residues Pro44–Val53 and Ala61–Leu89.

This is an uncharacterized protein from Schizosaccharomyces pombe (strain 972 / ATCC 24843) (Fission yeast).